Consider the following 194-residue polypeptide: Putative lipoprotein LppK (194 aa).

Residues 1–26 (MSRWTHRTFFIALSAIVTTAGFGSSG) form the signal peptide. Cysteine 27 is lipidated: N-palmitoyl cysteine. The S-diacylglycerol cysteine moiety is linked to residue cysteine 27. A disordered region spans residues 174–194 (GNSSGLTNPAPIKAPTPTPSH). A compositionally biased stretch (pro residues) spans 185 to 194 (IKAPTPTPSH).

This sequence belongs to the MTB12 family.

The protein localises to the cell membrane. This Mycobacterium leprae (strain TN) protein is Putative lipoprotein LppK (lppK).